A 143-amino-acid polypeptide reads, in one-letter code: Small ribosomal subunit protein uS11c (143 aa).

It belongs to the universal ribosomal protein uS11 family. As to quaternary structure, part of the 30S ribosomal subunit.

Its subcellular location is the plastid. The protein resides in the chloroplast. The protein is Small ribosomal subunit protein uS11c of Cenchrus americanus (Pearl millet).